A 386-amino-acid polypeptide reads, in one-letter code: 2-isopropylmalate synthase (386 aa).

Positions 15–269 constitute a Pyruvate carboxyltransferase domain; sequence IRIFDTTLRD…ETNVKTWKLY (255 aa). Residues Asp24, His207, His209, and Asn243 each coordinate a divalent metal cation.

It belongs to the alpha-IPM synthase/homocitrate synthase family. In terms of assembly, homodimer. Requires a divalent metal cation as cofactor.

The enzyme catalyses 3-methyl-2-oxobutanoate + acetyl-CoA + H2O = (2S)-2-isopropylmalate + CoA + H(+). The protein operates within amino-acid biosynthesis; L-leucine biosynthesis; L-leucine from 3-methyl-2-oxobutanoate: step 1/4. Its function is as follows. Catalyzes the condensation of the acetyl group of acetyl-CoA with 3-methyl-2-oxobutanoate (2-oxoisovalerate) to form 3-carboxy-3-hydroxy-4-methylpentanoate (2-isopropylmalate). Carries out the first step of the leucine biosynthesis pathway. This chain is 2-isopropylmalate synthase (leuA), found in Saccharolobus solfataricus (strain ATCC 35092 / DSM 1617 / JCM 11322 / P2) (Sulfolobus solfataricus).